Consider the following 367-residue polypeptide: Alanine racemase (367 aa).

The active-site Proton acceptor; specific for D-alanine is Lys-40. Position 40 is an N6-(pyridoxal phosphate)lysine (Lys-40). Arg-136 is a binding site for substrate. The active-site Proton acceptor; specific for L-alanine is Tyr-263. Met-310 lines the substrate pocket.

It belongs to the alanine racemase family. Pyridoxal 5'-phosphate serves as cofactor.

The catalysed reaction is L-alanine = D-alanine. Its pathway is amino-acid biosynthesis; D-alanine biosynthesis; D-alanine from L-alanine: step 1/1. Functionally, catalyzes the interconversion of L-alanine and D-alanine. May also act on other amino acids. This is Alanine racemase (alr) from Streptococcus thermophilus (strain ATCC BAA-250 / LMG 18311).